A 482-amino-acid chain; its full sequence is UDP-N-acetylmuramate--L-alanine ligase (482 aa).

The disordered stretch occupies residues 1-26 (MPQLPMTDSAPLPTPAPSSPAQPSAQ). ATP is bound at residue 140 to 146 (GTHGKTT).

The protein belongs to the MurCDEF family.

It is found in the cytoplasm. The enzyme catalyses UDP-N-acetyl-alpha-D-muramate + L-alanine + ATP = UDP-N-acetyl-alpha-D-muramoyl-L-alanine + ADP + phosphate + H(+). It functions in the pathway cell wall biogenesis; peptidoglycan biosynthesis. Cell wall formation. The sequence is that of UDP-N-acetylmuramate--L-alanine ligase from Deinococcus radiodurans (strain ATCC 13939 / DSM 20539 / JCM 16871 / CCUG 27074 / LMG 4051 / NBRC 15346 / NCIMB 9279 / VKM B-1422 / R1).